Here is a 1505-residue protein sequence, read N- to C-terminus: G patch domain-containing protein 8 (1505 aa).

A G-patch domain is found at serine 40–methionine 86. Residues aspartate 89–alanine 124 are a coiled coil. The segment at phenylalanine 136 to histidine 160 adopts a C2H2-type zinc-finger fold. Composition is skewed to basic and acidic residues over residues leucine 166 to alanine 175 and serine 182 to alanine 206. Positions leucine 166–valine 244 are disordered. A compositionally biased stretch (acidic residues) spans valine 223–aspartate 233. Lysine 311 participates in a covalent cross-link: Glycyl lysine isopeptide (Lys-Gly) (interchain with G-Cter in SUMO2). Basic and acidic residues-rich tracts occupy residues histidine 322 to serine 339 and glutamate 421 to lysine 436. 2 disordered regions span residues histidine 322 to tyrosine 393 and glutamine 419 to leucine 537. A compositionally biased stretch (polar residues) spans serine 437–alanine 449. Lysine 479 carries the N6-acetyllysine modification. Lysine 573 is covalently cross-linked (Glycyl lysine isopeptide (Lys-Gly) (interchain with G-Cter in SUMO2)). 2 stretches are compositionally biased toward basic and acidic residues: residues serine 575–glutamate 612 and serine 648–glycine 665. The segment at serine 575–serine 1304 is disordered. Position 648 is a phosphoserine (serine 648). Residues lysine 666–lysine 687 are compositionally biased toward basic residues. Over residues alanine 688–lysine 702 the composition is skewed to basic and acidic residues. Over residues serine 703 to lysine 715 the composition is skewed to basic residues. Serine 733, serine 735, and serine 753 each carry phosphoserine. The span at alanine 745 to glycine 767 shows a compositional bias: basic and acidic residues. Residues alanine 794–histidine 804 show a composition bias toward basic residues. A compositionally biased stretch (acidic residues) spans serine 832 to serine 849. The segment covering serine 856 to arginine 871 has biased composition (basic residues). Over residues arginine 872–aspartate 900 the composition is skewed to low complexity. Phosphoserine occurs at positions 915 and 918. Basic residues predominate over residues serine 923–tyrosine 932. Residues serine 985, serine 1013, serine 1018, serine 1037, and serine 1039 each carry the phosphoserine modification. The segment covering glutamate 1017–arginine 1031 has biased composition (basic and acidic residues). Residues glycine 1050–lysine 1063 are compositionally biased toward basic and acidic residues. A Phosphoserine modification is found at serine 1085. Composition is skewed to basic and acidic residues over residues leucine 1097–valine 1112, lysine 1163–serine 1185, and glutamate 1211–alanine 1220. Residue lysine 1109 forms a Glycyl lysine isopeptide (Lys-Gly) (interchain with G-Cter in SUMO2) linkage. Serine 1179 bears the Phosphoserine mark.

This is G patch domain-containing protein 8 (Gpatch8) from Mus musculus (Mouse).